Here is a 60-residue protein sequence, read N- to C-terminus: Cecropin-B1 (60 aa).

An N-terminal signal peptide occupies residues 1–24 (MNFSKVFALVLLIGLVLLTGHTEA).

This sequence belongs to the cecropin family.

The protein localises to the secreted. Its function is as follows. Putative antimicrobial peptide. Partially neutralizes lipopolysaccharides (LPS). Exhibits anti-inflammatory properties: inhibits LPS-induced iNOS/NOS2 transcription, nitric oxide (NO) and pro-inflammatory cytokine production in mouse macrophages and human peripheral blood mononuclear cells (PBMCs); inhibits LPS-induced activation of MAPK and NF-kappa-B signaling pathways in mouse macrophages. This Aedes aegypti (Yellowfever mosquito) protein is Cecropin-B1.